A 297-amino-acid polypeptide reads, in one-letter code: MNWISNVVRPKIRSFLNRRDVPENLWVKCPETGQMVFHKDLEANQYVIPGSGFHMRMGPADRLKATFDDGAYEEVALPDVPIDPLKFRDERRYIDRLKDARAKTGAQDAVKVAHGLLEGLPVTVAVQDFGFMGGSLGMAAGEAVVTGLFTAAEKKTPFIMFAASGGARMQEGILSLMQMPRTTVAIQELREARLPYIVVLTNPTTGGVTASYAMLGDVQIAEPGALIGFAGPRVIEQTIREKLPDGFQRSEYLFEHGMIDMVVHRHQMRETLARVCRLMMKAPGVPPKGRLPAPAAA.

The 270-residue stretch at Leu25 to Pro294 folds into the CoA carboxyltransferase N-terminal domain.

This sequence belongs to the AccD/PCCB family. Acetyl-CoA carboxylase is a heterohexamer composed of biotin carboxyl carrier protein (AccB), biotin carboxylase (AccC) and two subunits each of ACCase subunit alpha (AccA) and ACCase subunit beta (AccD).

It is found in the cytoplasm. The catalysed reaction is N(6)-carboxybiotinyl-L-lysyl-[protein] + acetyl-CoA = N(6)-biotinyl-L-lysyl-[protein] + malonyl-CoA. The protein operates within lipid metabolism; malonyl-CoA biosynthesis; malonyl-CoA from acetyl-CoA: step 1/1. In terms of biological role, component of the acetyl coenzyme A carboxylase (ACC) complex. Biotin carboxylase (BC) catalyzes the carboxylation of biotin on its carrier protein (BCCP) and then the CO(2) group is transferred by the transcarboxylase to acetyl-CoA to form malonyl-CoA. This is Acetyl-coenzyme A carboxylase carboxyl transferase subunit beta from Azorhizobium caulinodans (strain ATCC 43989 / DSM 5975 / JCM 20966 / LMG 6465 / NBRC 14845 / NCIMB 13405 / ORS 571).